Consider the following 176-residue polypeptide: NAD(P)H-quinone oxidoreductase subunit 6, chloroplastic (176 aa).

The next 5 membrane-spanning stretches (helical) occupy residues 10-30 (FLLV…VLLP), 32-52 (PIYS…FYIL), 61-81 (AQLL…VMFM), 92-112 (LWTV…ISLI), and 152-172 (FFLP…GAIA).

Belongs to the complex I subunit 6 family. As to quaternary structure, NDH is composed of at least 16 different subunits, 5 of which are encoded in the nucleus.

It is found in the plastid. The protein resides in the chloroplast thylakoid membrane. The catalysed reaction is a plastoquinone + NADH + (n+1) H(+)(in) = a plastoquinol + NAD(+) + n H(+)(out). The enzyme catalyses a plastoquinone + NADPH + (n+1) H(+)(in) = a plastoquinol + NADP(+) + n H(+)(out). Its function is as follows. NDH shuttles electrons from NAD(P)H:plastoquinone, via FMN and iron-sulfur (Fe-S) centers, to quinones in the photosynthetic chain and possibly in a chloroplast respiratory chain. The immediate electron acceptor for the enzyme in this species is believed to be plastoquinone. Couples the redox reaction to proton translocation, and thus conserves the redox energy in a proton gradient. In Solanum lycopersicum (Tomato), this protein is NAD(P)H-quinone oxidoreductase subunit 6, chloroplastic (ndhG).